The chain runs to 512 residues: Glutamyl-tRNA(Gln) amidotransferase subunit A (512 aa).

Catalysis depends on charge relay system residues Lys82 and Ser157. Catalysis depends on Ser181, which acts as the Acyl-ester intermediate.

It belongs to the amidase family. GatA subfamily. As to quaternary structure, heterotrimer of A, B and C subunits.

The catalysed reaction is L-glutamyl-tRNA(Gln) + L-glutamine + ATP + H2O = L-glutaminyl-tRNA(Gln) + L-glutamate + ADP + phosphate + H(+). Functionally, allows the formation of correctly charged Gln-tRNA(Gln) through the transamidation of misacylated Glu-tRNA(Gln) in organisms which lack glutaminyl-tRNA synthetase. The reaction takes place in the presence of glutamine and ATP through an activated gamma-phospho-Glu-tRNA(Gln). This is Glutamyl-tRNA(Gln) amidotransferase subunit A from Bordetella pertussis (strain Tohama I / ATCC BAA-589 / NCTC 13251).